Here is a 122-residue protein sequence, read N- to C-terminus: Defensin-like protein 181 (122 aa).

An N-terminal signal peptide occupies residues 1 to 26 (MERIPSLASLVSLLIIFATVVNQTRA). Disulfide bonds link Cys-29/Cys-70, Cys-36/Cys-55, Cys-39/Cys-64, Cys-43/Cys-66, Cys-76/Cys-122, Cys-87/Cys-107, Cys-92/Cys-116, and Cys-96/Cys-118.

Belongs to the DEFL family.

The protein localises to the secreted. Confers broad-spectrum resistance to pathogens. The sequence is that of Defensin-like protein 181 (PDF3.1) from Arabidopsis thaliana (Mouse-ear cress).